A 418-amino-acid chain; its full sequence is Transmembrane protease serine 11A (418 aa).

Residues 1 to 18 lie on the Cytoplasmic side of the membrane; that stretch reads MMYRTVGFGTRSRNLKPW. The helical; Signal-anchor for type II membrane protein transmembrane segment at 19–39 threads the bilayer; the sequence is MIAVLIVLSLTVVAVTIGLLV. Topologically, residues 40–418 are extracellular; the sequence is HFLVFDQKKE…RNWIASKTGI (379 aa). An SEA domain is found at 47 to 164; that stretch reads KKEYYHGSFK…SSVQVNAMSS (118 aa). N-linked (GlcNAc...) asparagine glycosylation is present at Asn153. The Peptidase S1 domain maps to 187–417; it reads IASGVIAPKA…YRNWIASKTG (231 aa). Cysteines 212 and 228 form a disulfide. Residues His227 and Asp272 each act as charge relay system in the active site. The N-linked (GlcNAc...) asparagine glycan is linked to Asn303. 2 disulfide bridges follow: Cys337–Cys353 and Cys364–Cys393. The active-site Charge relay system is the Ser368.

This sequence belongs to the peptidase S1 family. As to quaternary structure, may interact with ZBTB17. Expressed in esophagus, liver, colon and lung. Down-regulated in esophagus cancers.

Its subcellular location is the membrane. Probable serine protease which may play a role in cellular senescence. Overexpression inhibits cell growth and induce G1 cell cycle arrest. This chain is Transmembrane protease serine 11A (TMPRSS11A), found in Homo sapiens (Human).